The primary structure comprises 553 residues: Solute carrier family 22 member 2 (553 aa).

The Cytoplasmic segment spans residues Met-1–Thr-21. Residues Phe-22–Leu-42 traverse the membrane as a helical segment. Over Gly-43–Asp-150 the chain is Extracellular. Asn-71 carries an N-linked (GlcNAc...) asparagine glycan. A helical membrane pass occupies residues Leu-151–Ala-171. Residues Asp-172 to Lys-177 are Cytoplasmic-facing. Residues Phe-178–Pro-198 form a helical membrane-spanning segment. The Extracellular portion of the chain corresponds to Asn-199–Gln-210. Residues Gly-211 to Leu-231 form a helical membrane-spanning segment. Topologically, residues Gly-232–Gly-238 are cytoplasmic. A helical transmembrane segment spans residues Ile-239–Leu-259. At Pro-260–Arg-263 the chain is on the extracellular side. The helical transmembrane segment at Trp-264 to Pro-284 threads the bilayer. The short motif at Pro-284–Arg-288 is the Proline-rich sequence element. At Glu-285 to Thr-348 the chain is on the cytoplasmic side. Residues Leu-349–Met-369 traverse the membrane as a helical segment. The Extracellular portion of the chain corresponds to Gly-370–Asn-375. The chain crosses the membrane as a helical span at residues Ile-376–Leu-396. Topologically, residues Thr-397–Arg-404 are cytoplasmic. Residues Tyr-405–Pro-425 form a helical membrane-spanning segment. The Extracellular portion of the chain corresponds to Asp-426–Lys-432. A helical transmembrane segment spans residues Ile-433–Val-453. Topologically, residues Asn-454–Asn-464 are cytoplasmic. The chain crosses the membrane as a helical span at residues Leu-465–Val-485. Topologically, residues Tyr-486–Glu-494 are extracellular. Residues Phe-495–Pro-515 traverse the membrane as a helical segment. At Glu-516–Ser-553 the chain is on the cytoplasmic side.

Belongs to the major facilitator (TC 2.A.1) superfamily. Organic cation transporter (TC 2.A.1.19) family. In terms of processing, tyrosine phosphorylated by tyrosine-protein kinase YES1. As to expression, expressed in kidney and ureter. To a lower extent, also expressed in brain and embryo.

It is found in the basolateral cell membrane. The protein resides in the basal cell membrane. Its subcellular location is the apical cell membrane. The catalysed reaction is (R)-noradrenaline(out) = (R)-noradrenaline(in). It carries out the reaction (R)-adrenaline(out) = (R)-adrenaline(in). It catalyses the reaction serotonin(out) = serotonin(in). The enzyme catalyses dopamine(out) = dopamine(in). The catalysed reaction is histamine(out) = histamine(in). It carries out the reaction thiamine(in) = thiamine(out). It catalyses the reaction creatinine(in) = creatinine(out). The enzyme catalyses 1-methylnicotinamide(out) = 1-methylnicotinamide(in). The catalysed reaction is guanidine(out) = guanidine(in). It carries out the reaction choline(out) = choline(in). It catalyses the reaction agmatine(out) = agmatine(in). The enzyme catalyses putrescine(out) = putrescine(in). The catalysed reaction is spermidine(in) = spermidine(out). It carries out the reaction tyramine(in) = tyramine(out). It catalyses the reaction L-histidyl-L-proline diketopiperazine(in) = L-histidyl-L-proline diketopiperazine(out). The enzyme catalyses (R)-salsolinol(in) = (R)-salsolinol(out). The catalysed reaction is N-methyl-(R)-salsolinol(in) = N-methyl-(R)-salsolinol(out). It carries out the reaction acetylcholine(in) = acetylcholine(out). It catalyses the reaction prostaglandin F2alpha(out) = prostaglandin F2alpha(in). The enzyme catalyses prostaglandin E2(out) = prostaglandin E2(in). Tyrosine phosphorylation of the transporter leads to activation of the transport activity. TEA uptake is activated by tyrosine phosphorylation. Inhibited by cGMP, most likely through a cGMP-binding protein that interacts with OCT2. In terms of biological role, electrogenic voltage-dependent transporter that mediates the transport of a variety of organic cations such as endogenous bioactive amines, cationic drugs and xenobiotics. Functions as a Na(+)-independent, bidirectional uniporter. Cation cellular uptake or release is driven by the electrochemical potential, i.e. membrane potential and concentration gradient. However, may also engage electroneutral cation exchange when saturating concentrations of cation substrates are reached. Predominantly expressed at the basolateral membrane of hepatocytes and proximal tubules and involved in the uptake and disposition of cationic compounds by hepatic and renal clearance from the blood flow. Implicated in monoamine neurotransmitters uptake such as histamine, dopamine, adrenaline/epinephrine, noradrenaline/norepinephrine, serotonin and tyramine, thereby supporting a physiological role in the central nervous system by regulating interstitial concentrations of neurotransmitters. Also capable of transporting dopaminergic neuromodulators cyclo(his-pro), salsolinol and N-methyl-salsolinol, thereby involved in the maintenance of dopaminergic cell integrity in the central nervous system. Mediates the bidirectional transport of acetylcholine (ACh) at the apical membrane of ciliated cell in airway epithelium, thereby playing a role in luminal release of ACh from bronchial epithelium. Also transports guanidine and endogenous monoamines such as vitamin B1/thiamine, creatinine and N-1-methylnicotinamide (NMN). Mediates the uptake and efflux of quaternary ammonium compound choline. Mediates the bidirectional transport of polyamine agmatine and the uptake of polyamines putrescine and spermidine. Able to transport non-amine endogenous compounds such as prostaglandin E2 (PGE2) and prostaglandin F2-alpha (PGF2-alpha). Also involved in the uptake of xenobiotic 4-(4-(dimethylamino)styryl)-N-methylpyridinium (ASP). May contribute to regulate the transport of organic compounds in testis across the blood-testis-barrier. This is Solute carrier family 22 member 2 from Mus musculus (Mouse).